Reading from the N-terminus, the 158-residue chain is Transcription elongation factor GreA (158 aa).

It belongs to the GreA/GreB family.

Its function is as follows. Necessary for efficient RNA polymerase transcription elongation past template-encoded arresting sites. The arresting sites in DNA have the property of trapping a certain fraction of elongating RNA polymerases that pass through, resulting in locked ternary complexes. Cleavage of the nascent transcript by cleavage factors such as GreA or GreB allows the resumption of elongation from the new 3'terminus. GreA releases sequences of 2 to 3 nucleotides. The sequence is that of Transcription elongation factor GreA from Psychrobacter sp. (strain PRwf-1).